We begin with the raw amino-acid sequence, 376 residues long: Lipid-A-disaccharide synthase (376 aa).

Belongs to the LpxB family.

It carries out the reaction a lipid X + a UDP-2-N,3-O-bis[(3R)-3-hydroxyacyl]-alpha-D-glucosamine = a lipid A disaccharide + UDP + H(+). The protein operates within bacterial outer membrane biogenesis; LPS lipid A biosynthesis. Its function is as follows. Condensation of UDP-2,3-diacylglucosamine and 2,3-diacylglucosamine-1-phosphate to form lipid A disaccharide, a precursor of lipid A, a phosphorylated glycolipid that anchors the lipopolysaccharide to the outer membrane of the cell. This Coxiella burnetii (strain CbuG_Q212) (Coxiella burnetii (strain Q212)) protein is Lipid-A-disaccharide synthase.